The sequence spans 197 residues: Probable S-adenosylmethionine-dependent methyltransferase MJ0882 (197 aa).

S-adenosyl-L-methionine-binding positions include G63–G67, D84, and N129. N129 to I132 is a substrate binding site.

The protein belongs to the methyltransferase superfamily.

Its function is as follows. Probable methyltransferase that uses S-adenosylmethionine as the methyl donor. Binds neither NAD nor NADP in vitro. This is Probable S-adenosylmethionine-dependent methyltransferase MJ0882 from Methanocaldococcus jannaschii (strain ATCC 43067 / DSM 2661 / JAL-1 / JCM 10045 / NBRC 100440) (Methanococcus jannaschii).